The following is a 528-amino-acid chain: 2-isopropylmalate synthase (528 aa).

Residues 12 to 279 form the Pyruvate carboxyltransferase domain; sequence IRIFDTTLRD…DSSINTPRIV (268 aa). Mn(2+) contacts are provided by Asp21, His214, His216, and Asn250. A regulatory domain region spans residues 401–528; it reads RLASMTISDV…STDVPTPATA (128 aa).

The protein belongs to the alpha-IPM synthase/homocitrate synthase family. LeuA type 1 subfamily. In terms of assembly, homodimer. The cofactor is Mn(2+).

It is found in the cytoplasm. The enzyme catalyses 3-methyl-2-oxobutanoate + acetyl-CoA + H2O = (2S)-2-isopropylmalate + CoA + H(+). It participates in amino-acid biosynthesis; L-leucine biosynthesis; L-leucine from 3-methyl-2-oxobutanoate: step 1/4. Its function is as follows. Catalyzes the condensation of the acetyl group of acetyl-CoA with 3-methyl-2-oxobutanoate (2-ketoisovalerate) to form 3-carboxy-3-hydroxy-4-methylpentanoate (2-isopropylmalate). The chain is 2-isopropylmalate synthase from Stenotrophomonas maltophilia (strain K279a).